We begin with the raw amino-acid sequence, 273 residues long: Probable branched-chain-amino-acid aminotransferase (273 aa).

K133 is subject to N6-(pyridoxal phosphate)lysine.

This sequence belongs to the class-IV pyridoxal-phosphate-dependent aminotransferase family. Requires pyridoxal 5'-phosphate as cofactor.

The catalysed reaction is L-leucine + 2-oxoglutarate = 4-methyl-2-oxopentanoate + L-glutamate. The enzyme catalyses L-isoleucine + 2-oxoglutarate = (S)-3-methyl-2-oxopentanoate + L-glutamate. It carries out the reaction L-valine + 2-oxoglutarate = 3-methyl-2-oxobutanoate + L-glutamate. The protein operates within amino-acid biosynthesis; L-isoleucine biosynthesis; L-isoleucine from 2-oxobutanoate: step 4/4. It participates in amino-acid biosynthesis; L-leucine biosynthesis; L-leucine from 3-methyl-2-oxobutanoate: step 4/4. Its pathway is amino-acid biosynthesis; L-valine biosynthesis; L-valine from pyruvate: step 4/4. Functionally, acts on leucine, isoleucine and valine. In Thermotoga maritima (strain ATCC 43589 / DSM 3109 / JCM 10099 / NBRC 100826 / MSB8), this protein is Probable branched-chain-amino-acid aminotransferase (ilvE).